Consider the following 258-residue polypeptide: UPF0246 protein LHK_02295 (258 aa).

This sequence belongs to the UPF0246 family.

The protein is UPF0246 protein LHK_02295 of Laribacter hongkongensis (strain HLHK9).